Reading from the N-terminus, the 94-residue chain is Co-chaperonin GroES (94 aa).

It belongs to the GroES chaperonin family. As to quaternary structure, heptamer of 7 subunits arranged in a ring. Interacts with the chaperonin GroEL.

The protein localises to the cytoplasm. In terms of biological role, together with the chaperonin GroEL, plays an essential role in assisting protein folding. The GroEL-GroES system forms a nano-cage that allows encapsulation of the non-native substrate proteins and provides a physical environment optimized to promote and accelerate protein folding. GroES binds to the apical surface of the GroEL ring, thereby capping the opening of the GroEL channel. This Clostridium botulinum protein is Co-chaperonin GroES.